A 255-amino-acid polypeptide reads, in one-letter code: MRFTVLIPARLASTRLPNKPLADMGGAPMVVRVAQRAMQSTAARTVVATDSTDIIDKCAAFGVAAVLTRADHPSGSDRLAEACTALGLADDDIVVNVQGDEPLIDPALIDAVARLLNERPDCAMSTAAHSIDQMADLLNPNVVKVVLDARQTALYFSRSPIPAARDFAGKPWWEDGEKGCKLPKPLRHVGIYGYRVGFLRQFPTLPQAPLEQLESLEQLRALWHGHRIAVHITDEAPGPGVDTPEDLARARQFFP.

Belongs to the KdsB family.

The protein resides in the cytoplasm. The enzyme catalyses 3-deoxy-alpha-D-manno-oct-2-ulosonate + CTP = CMP-3-deoxy-beta-D-manno-octulosonate + diphosphate. The protein operates within nucleotide-sugar biosynthesis; CMP-3-deoxy-D-manno-octulosonate biosynthesis; CMP-3-deoxy-D-manno-octulosonate from 3-deoxy-D-manno-octulosonate and CTP: step 1/1. Its pathway is bacterial outer membrane biogenesis; lipopolysaccharide biosynthesis. Functionally, activates KDO (a required 8-carbon sugar) for incorporation into bacterial lipopolysaccharide in Gram-negative bacteria. This chain is 3-deoxy-manno-octulosonate cytidylyltransferase, found in Polaromonas sp. (strain JS666 / ATCC BAA-500).